The following is a 470-amino-acid chain: 3-isopropylmalate dehydratase large subunit (470 aa).

Positions 349, 410, and 413 each coordinate [4Fe-4S] cluster.

It belongs to the aconitase/IPM isomerase family. LeuC type 1 subfamily. In terms of assembly, heterodimer of LeuC and LeuD. [4Fe-4S] cluster serves as cofactor.

The enzyme catalyses (2R,3S)-3-isopropylmalate = (2S)-2-isopropylmalate. It functions in the pathway amino-acid biosynthesis; L-leucine biosynthesis; L-leucine from 3-methyl-2-oxobutanoate: step 2/4. Catalyzes the isomerization between 2-isopropylmalate and 3-isopropylmalate, via the formation of 2-isopropylmaleate. The sequence is that of 3-isopropylmalate dehydratase large subunit from Nitrosomonas europaea (strain ATCC 19718 / CIP 103999 / KCTC 2705 / NBRC 14298).